A 320-amino-acid chain; its full sequence is Cytochrome f (320 aa).

An N-terminal signal peptide occupies residues 1–35 (MQNRNTFLGVKEQITRSIFVSIMIYVITRASISNA). Heme contacts are provided by tyrosine 36, cysteine 56, cysteine 59, and histidine 60. The helical transmembrane segment at 286–306 (IQGLLFFLASVILAQIFLVLK) threads the bilayer.

Belongs to the cytochrome f family. The 4 large subunits of the cytochrome b6-f complex are cytochrome b6, subunit IV (17 kDa polypeptide, petD), cytochrome f and the Rieske protein, while the 4 small subunits are PetG, PetL, PetM and PetN. The complex functions as a dimer. Requires heme as cofactor.

Its subcellular location is the plastid. It localises to the chloroplast thylakoid membrane. Its function is as follows. Component of the cytochrome b6-f complex, which mediates electron transfer between photosystem II (PSII) and photosystem I (PSI), cyclic electron flow around PSI, and state transitions. The polypeptide is Cytochrome f (Dioscorea elephantipes (Elephant's foot yam)).